The chain runs to 1321 residues: Bile salt export pump (1321 aa).

At 1-62 (MSDSVILRSV…FSSSKDNWLM (62 aa)) the chain is on the cytoplasmic side. The ABC transmembrane type-1 1 domain occupies 62-385 (MFMGSVCALL…ASSCLEIFST (324 aa)). Residues 63 to 83 (FMGSVCALLHGMAQPGMIIVF) traverse the membrane as a helical segment. Over 84–147 (GILTDIFVEY…VIKFSGIYAG (64 aa)) the chain is Extracellular. N-linked (GlcNAc...) asparagine glycans are attached at residues Asn-109, Asn-116, Asn-122, and Asn-125. Residues 148–168 (VGVAVLILGYFQIRLWVITGA) form a helical membrane-spanning segment. At 169–215 (RQIRKMRKFYFRRIMRMEIGWFDCTSVGELNSRFSDDINKIDEAIAD) the chain is on the cytoplasmic side. A helical transmembrane segment spans residues 216-236 (QMALFLQRLSTALSGLLLGFY). Topologically, residues 237–240 (RGWK) are extracellular. The helical transmembrane segment at 241–261 (LTLVILAVSPLIGIGAAVIGL) threads the bilayer. The Cytoplasmic portion of the chain corresponds to 262 to 319 (SVAKFTELELKAYAKAGSIADEVLSSIRTVAAFGGENKEVERYEKNLMFAQRWGIWKG). Residues 320-340 (MVMGFFTGYMWCLIFFCYALA) form a helical membrane-spanning segment. Topologically, residues 341 to 353 (FWYGSRLVLDEGE) are extracellular. Residues 354-374 (YTPGTLIQIFLCVIIAAMNIG) traverse the membrane as a helical segment. Residues 375–755 (NASSCLEIFS…KYNISEWPYI (381 aa)) lie on the Cytoplasmic side of the membrane. In terms of domain architecture, ABC transporter 1 spans 420-656 (IEFHNVTFHY…KGVYFMLVTL (237 aa)). 455-462 (GSSGAGKS) is an ATP binding site. Phosphothreonine is present on Thr-586. Ser-587 is subject to Phosphoserine. Positions 651 to 674 (FMLVTLQSQEDNTHKETGIKGKDT) are interaction with HAX1. Basic and acidic residues predominate over residues 662–684 (NTHKETGIKGKDTTEGDTPERTF). A disordered region spans residues 662–722 (NTHKETGIKG…PLAIGDHKSS (61 aa)). A phosphoserine mark is found at Ser-692, Ser-703, and Ser-706. In terms of domain architecture, ABC transmembrane type-1 2 spans 755 to 1043 (ILVGALCAAI…TFSYTPSYAK (289 aa)). A helical membrane pass occupies residues 756-776 (LVGALCAAINGAVTPIYSLLF). The Extracellular segment spans residues 777–794 (SQILKTFSLVDKEQQRSE). Residues 795-815 (IYSMCLFFVILGCVSLFTQFL) form a helical membrane-spanning segment. Over 816–869 (QGYNFAKSGELLTKRLRKFGFKAMLRQDIGWFDDLKNNPGVLTTRLATDASQVQ) the chain is Cytoplasmic. Transmembrane regions (helical) follow at residues 870–890 (GATG…FVAV) and 891–911 (LIAF…FPFL). Residues 912–979 (ALSGAVQTKM…SYKTAIRKAN (68 aa)) are Cytoplasmic-facing. A helical transmembrane segment spans residues 980–1000 (VYGLCYAFSQGISFLANSAAY). The Extracellular portion of the chain corresponds to 1001–1011 (RYGGYLIVYED). A helical membrane pass occupies residues 1012–1032 (LNFSYVFRVVSSIAMSATAVG). The Cytoplasmic segment spans residues 1033–1321 (RTFSYTPSYA…KLVITGAPIS (289 aa)). The ABC transporter 2 domain occupies 1078–1316 (IDFIDCKFTY…KGAYYKLVIT (239 aa)). Residue 1113–1120 (GSSGCGKS) participates in ATP binding. Ser-1321 carries the post-translational modification Phosphoserine.

It belongs to the ABC transporter superfamily. ABCB family. Multidrug resistance exporter (TC 3.A.1.201) subfamily. As to quaternary structure, interacts with HAX1. Interacts with the adapter protein complex 2 (AP-2) throught AP2A2 or AP2A1; this interaction regulates cell membrane expression of ABCB11 through its internalization in a clathrin-dependent manner and its subsequent degradation. N-glycosylated. In terms of processing, ubiquitinated; short-chain ubiquitination regulates cell-Surface expression of ABCB11. In terms of tissue distribution, expressed predominantly, if not exclusively in the liver, where it was further localized to the canalicular microvilli and to subcanalicular vesicles of the hepatocytes by in situ.

Its subcellular location is the apical cell membrane. It localises to the recycling endosome membrane. The protein localises to the endosome. The protein resides in the cell membrane. It catalyses the reaction cholate(in) + ATP + H2O = cholate(out) + ADP + phosphate + H(+). The catalysed reaction is taurocholate(in) + ATP + H2O = taurocholate(out) + ADP + phosphate + H(+). It carries out the reaction glycocholate(in) + ATP + H2O = glycocholate(out) + ADP + phosphate + H(+). The enzyme catalyses glycochenodeoxycholate(in) + ATP + H2O = glycochenodeoxycholate(out) + ADP + phosphate + H(+). It catalyses the reaction taurochenodeoxycholate(in) + ATP + H2O = taurochenodeoxycholate(out) + ADP + phosphate + H(+). The catalysed reaction is glycoursodeoxycholate(in) + ATP + H2O = glycoursodeoxycholate(out) + ADP + phosphate + H(+). It carries out the reaction tauroursodeoxycholate(in) + ATP + H2O = tauroursodeoxycholate(out) + ADP + phosphate + H(+). The enzyme catalyses taurodeoxycholate(in) + ATP + H2O = taurodeoxycholate(out) + ADP + phosphate + H(+). It catalyses the reaction taurolithocholate 3-sulfate(in) + ATP + H2O = taurolithocholate 3-sulfate(out) + ADP + phosphate + H(+). The catalysed reaction is pravastatin(in) + ATP + H2O = pravastatin(out) + ADP + phosphate + H(+). With respect to regulation, the uptake of taurocholate is inhibited by taurolithocholate sulfate with an IC(50) of 9 uM. Pravastatin competitively inhibits the transport of taurocholic acid. Cyclosporin A, glibenclamide, rifampicin and troglitazonestrongly competitively inhibit the transport activity of taurocholate. The canalicular transport activity of taurocholate is strongly dependent on canalicular membrane cholesterol content. The uptake of taurocholate is increased by short- and medium-chain fatty acids. Cholesterol increases transport capacity of taurocholate without affecting the affinity for the substrate. In terms of biological role, catalyzes the transport of the major hydrophobic bile salts, such as taurine and glycine-conjugated cholic acid across the canalicular membrane of hepatocytes in an ATP-dependent manner, therefore participates in hepatic bile acid homeostasis and consequently to lipid homeostasis through regulation of biliary lipid secretion in a bile salts dependent manner. Transports taurine-conjugated bile salts more rapidly than glycine-conjugated bile salts. Also transports non-bile acid compounds, such as pravastatin and fexofenadine in an ATP-dependent manner and may be involved in their biliary excretion. This is Bile salt export pump from Mus musculus (Mouse).